The chain runs to 680 residues: WD repeat-containing protein 48 homolog (680 aa).

WD repeat units follow at residues 26 to 65 (QHRNGVNALQLDANNGKLYSAGRDAIIRVWNTRTDSSEKY), 71 to 110 (HHNDWVNDIVLCCNGRNLISASCDTTVKVWNAQKGFCMST), 113 to 152 (THRDYVQALAYAKDREQVASAGLDKAIFLWDVNTLTALTA), 164 to 203 (GSKDSIYSLAMNPSGTVIVSGSTENILRIWDPRTCMRSMK), 206 to 245 (GHTENVRCLVVSPDGNQVVSGSSDGTIKVWNLGQQRCVQT), 248 to 287 (VHKEGVWSLLMSENFQYIISGSRDRNIIVTEMRNPSNKTL), 290 to 329 (EEQAPVLSLGYNIDKTGVWATTWNSDIRCWKLPMYDRCTM), and 350 to 389 (KGGAAIKECAVLNDKRYIITKDSQDQVVVYDVLRVVKKEQ). Positions 592–616 (ETTPSGGNANNSLQNSQSDANSEGS) are disordered.

This sequence belongs to the WD repeat WDR48 family. As to quaternary structure, catalytic component of the Usp12-46 deubiquitylase complex consisting of Usp12-46, Wdr20 and Uaf1; regulatory subunit that, together wtih Wdr20, stabilizes Usp12-46. The Usp12-46 deubiquitylase complex associates with arr/arrow; the interaction leads to deubiquitination and stabilization of arr/arrow.

In terms of biological role, regulatory component of the Usp12-46 deubiquitylase complex. activates deubiquitination by increasing the catalytic turnover without increasing the affinity of deubiquitinating enzymes for the substrate. The complex deubiquitylates the wg/wingless-signaling receptor arr/arrow, which stabilizes the receptor and increases its concentration at the cell surface; this enhances the sensitivity of cells to wg/wingless-signal stimulation. This increases the amplitude and spatial range of the signaling response to the wg/wingless morphogen gradient, facilitating the precise concentration-dependent regulation of its target genes. Together with Wdr20 and Usp12-46 required for wg/wingless-mediated signaling in the wing imaginal disc and for wg/wingless-dependent regulation of intestinal stem cell proliferation. The sequence is that of WD repeat-containing protein 48 homolog from Drosophila erecta (Fruit fly).